A 716-amino-acid polypeptide reads, in one-letter code: DNA ligase (716 aa).

NAD(+) contacts are provided by residues 49–53 (DAEYD), 98–99 (SL), and E131. The active-site N6-AMP-lysine intermediate is the K133. Residues R154, E191, K308, and K332 each coordinate NAD(+). Zn(2+)-binding residues include C437, C439, C461, and C467. In terms of domain architecture, BRCT spans 638–716 (KRHSPIATKT…EDEWLQLIAE (79 aa)).

It belongs to the NAD-dependent DNA ligase family. LigA subfamily. It depends on Mg(2+) as a cofactor. Requires Mn(2+) as cofactor.

It carries out the reaction NAD(+) + (deoxyribonucleotide)n-3'-hydroxyl + 5'-phospho-(deoxyribonucleotide)m = (deoxyribonucleotide)n+m + AMP + beta-nicotinamide D-nucleotide.. In terms of biological role, DNA ligase that catalyzes the formation of phosphodiester linkages between 5'-phosphoryl and 3'-hydroxyl groups in double-stranded DNA using NAD as a coenzyme and as the energy source for the reaction. It is essential for DNA replication and repair of damaged DNA. In Bradyrhizobium sp. (strain BTAi1 / ATCC BAA-1182), this protein is DNA ligase.